We begin with the raw amino-acid sequence, 307 residues long: GTPase Era (307 aa).

Positions 17–186 constitute an Era-type G domain; the sequence is RCGFVAIVGR…LELLKPYLPE (170 aa). Positions 25 to 32 are G1; that stretch reads GRPNVGKS. 25-32 lines the GTP pocket; sequence GRPNVGKS. The G2 stretch occupies residues 51 to 55; sequence QTTRN. The interval 72–75 is G3; sequence DTPG. Residues 72 to 76 and 133 to 136 contribute to the GTP site; these read DTPGF and NKID. Residues 133–136 form a G4 region; the sequence is NKID. Positions 165–167 are G5; that stretch reads VSA. The KH type-2 domain occupies 217–293; sequence LGEELPYAMN…FLKVWVKVKS (77 aa).

It belongs to the TRAFAC class TrmE-Era-EngA-EngB-Septin-like GTPase superfamily. Era GTPase family. In terms of assembly, monomer.

The protein resides in the cytoplasm. It is found in the cell inner membrane. Functionally, an essential GTPase that binds both GDP and GTP, with rapid nucleotide exchange. Plays a role in 16S rRNA processing and 30S ribosomal subunit biogenesis and possibly also in cell cycle regulation and energy metabolism. The polypeptide is GTPase Era (Neisseria meningitidis serogroup C / serotype 2a (strain ATCC 700532 / DSM 15464 / FAM18)).